The following is a 210-amino-acid chain: Probable GTP-binding protein EngB (210 aa).

The 175-residue stretch at 25–199 folds into the EngB-type G domain; it reads CGIEVAFAGR…RQKLDSWFSE (175 aa). GTP is bound by residues 33-40, 60-64, 78-81, 145-148, and 178-180; these read GRSNAGKS, GRTQL, DLPG, TKAD, and FSS. Ser-40 and Thr-62 together coordinate Mg(2+).

Belongs to the TRAFAC class TrmE-Era-EngA-EngB-Septin-like GTPase superfamily. EngB GTPase family. The cofactor is Mg(2+).

In terms of biological role, necessary for normal cell division and for the maintenance of normal septation. In Salmonella paratyphi C (strain RKS4594), this protein is Probable GTP-binding protein EngB.